A 431-amino-acid chain; its full sequence is Enolase (431 aa).

Position 167 (glutamine 167) interacts with (2R)-2-phosphoglycerate. The active-site Proton donor is the glutamate 209. Residues aspartate 246, glutamate 289, and aspartate 316 each coordinate Mg(2+). (2R)-2-phosphoglycerate is bound by residues lysine 341, arginine 370, serine 371, and lysine 392. The active-site Proton acceptor is the lysine 341.

This sequence belongs to the enolase family. As to quaternary structure, component of the RNA degradosome, a multiprotein complex involved in RNA processing and mRNA degradation. Mg(2+) is required as a cofactor.

The protein localises to the cytoplasm. Its subcellular location is the secreted. It is found in the cell surface. It carries out the reaction (2R)-2-phosphoglycerate = phosphoenolpyruvate + H2O. The protein operates within carbohydrate degradation; glycolysis; pyruvate from D-glyceraldehyde 3-phosphate: step 4/5. Its function is as follows. Catalyzes the reversible conversion of 2-phosphoglycerate (2-PG) into phosphoenolpyruvate (PEP). It is essential for the degradation of carbohydrates via glycolysis. The polypeptide is Enolase (Shewanella woodyi (strain ATCC 51908 / MS32)).